Reading from the N-terminus, the 747-residue chain is MPLFKLPAEEKQIDDAMRNFAEKVFASEVKDEGGRQEISPFDVDEICPISHHEMQAHIFHLETLSTSTEARRKKRFQGRKTVNLSIPLSETSSTKLSHIDEYISSSPTYQTVPDFQRVQITGDYASGVTVEDFEIVCKGLYRALCIREKYMQKSFQRFPKTPSKYLRNIDGEAWVANESFYPVFTPPVKKGEDPFRTDNLPENLGYHLKMKDGVVYVYPNEAAVSKDEPKPLPYPNLDTFLDDMNFLLALIAQGPVKTYTHRRLKFLSSKFQVHQMLNEMDELKELKNNPHRDFYNCRKVDTHIHAAACMNQKHLLRFIKKSYQIDADRVVYSTKEKNLTLKELFAKLKMHPYDLTVDSLDVHAGRQTFQRFDKFNDKYNPVGASELRDLYLKTDNYINGEYFATIIKEVGADLVEAKYQHAEPRLSIYGRSPDEWSKLSSWFVCNRIHCPNMTWMIQVPRIYDVFRSKNFLPHFGKMLENIFMPVFEATINPQADPELSVFLKHITGFDSVDDESKHSGHMFSSKSPKPQEWTLEKNPSYTYYAYYMYANIMVLNSLRKERGMNTFLFRPHCGEAGALTHLMTAFMIADDISHGLNLKKSPVLQYLFFLAQIPIAMSPLSNNSLFLEYAKNPFLDFLQKGLMISLSTDDPMQFHFTKEPLMEEYAIAAQVFKLSTCDMCEVARNSVLQCGISHEEKVKFLGDNYLEEGPAGNDIRRTNVAQIRMAYRYETWCYELNLIAEGLKSTE.

A Phosphothreonine modification is found at Thr-81. Phosphoserine is present on Ser-85. Position 216 is a phosphotyrosine (Tyr-216). Residues His-303 and His-305 each coordinate Zn(2+). Residues His-305 and 374 to 379 (KFNDKY) each bind substrate. The residue at position 441 (Ser-441) is a Phosphoserine. His-572 serves as a coordination point for Zn(2+). Position 575 (Glu-575) interacts with substrate. The active-site Proton acceptor is the His-594. Asp-649 is a Zn(2+) binding site. 650–653 (DPMQ) is a substrate binding site.

The protein belongs to the metallo-dependent hydrolases superfamily. Adenosine and AMP deaminases family. Homotetramer. Zn(2+) serves as cofactor.

It carries out the reaction AMP + H2O + H(+) = IMP + NH4(+). Its pathway is purine metabolism; IMP biosynthesis via salvage pathway; IMP from AMP: step 1/1. AMP deaminase plays a critical role in energy metabolism. The protein is AMP deaminase 1 of Homo sapiens (Human).